Here is a 201-residue protein sequence, read N- to C-terminus: Recombination protein RecR (201 aa).

A C4-type zinc finger spans residues 57 to 72 (CADCRTFTEQEICTIC). A Toprim domain is found at 81–176 (GLICVVESPA…DASRIAHGVP (96 aa)).

This sequence belongs to the RecR family.

May play a role in DNA repair. It seems to be involved in an RecBC-independent recombinational process of DNA repair. It may act with RecF and RecO. This chain is Recombination protein RecR, found in Erwinia tasmaniensis (strain DSM 17950 / CFBP 7177 / CIP 109463 / NCPPB 4357 / Et1/99).